Consider the following 321-residue polypeptide: Chitinase-like protein 1 (321 aa).

Positions 1–26 are cleaved as a signal peptide; that stretch reads MVTIRSGSIVILVLLAVSFLALVANG. A disulfide bond links C42 and C55. An N-linked (GlcNAc...) asparagine glycan is attached at N57. C157 and C167 are joined by a disulfide. N208 and N244 each carry an N-linked (GlcNAc...) asparagine glycan. C267 and C304 are joined by a disulfide. The disordered stretch occupies residues 297–321; the sequence is GPNDELSCAEQKPFNPSTVPSSSSS. Positions 310 to 321 are enriched in polar residues; the sequence is FNPSTVPSSSSS.

It belongs to the glycosyl hydrolase 19 family. Mostly expressed in seedlings shoots and roots, stems, and flowers, and, to a lower extent, in flowers, mature leaves and roots.

The protein localises to the secreted. No chitinase activity. Essential for normal plant growth and development. Regulates cell expansion extent and differentiation at least in roots and hypocotyls. Prevents lignin accumulation in the pith. May modulate ethylene-mediated regulation during development. Probably required to establish thermotolerance acclimation. Plays a role for controlled anisotropic cell expansion in the regulation of waving during root gravitropism and thigmotropism. Involved in the root system architecture adaptation to multiple environmental conditions such as nitrate. Contributes to salt tolerance and possibly to drought by preventing the overaccumulation of sodium ions. In Arabidopsis thaliana (Mouse-ear cress), this protein is Chitinase-like protein 1 (CTL1).